The chain runs to 249 residues: Neurotrophic factor BDNF precursor form (249 aa).

The N-terminal stretch at 1 to 18 is a signal peptide; the sequence is MTILFLTMVISYFGCMKA. A propeptide spanning residues 19–130 is cleaved from the precursor; the sequence is APMKEVNVHG…AANMSMRVRR (112 aa). Residue asparagine 123 is glycosylated (N-linked (GlcNAc...) asparagine). 3 disulfides stabilise this stretch: cysteine 143–cysteine 210, cysteine 188–cysteine 239, and cysteine 198–cysteine 241.

The protein belongs to the NGF-beta family. Monomers and homodimers. Binds to NTRK2/TRKB. Can form heterodimers with other neurotrophin family members, such as NTF3 and NTF4 (in vitro), but the physiological relevance of this is not clear. BDNF precursor form: interacts with the heterodimer formed by NGFR and SORCS2. Mature BDNF has much lower affinity for the heterodimer formed by NGFR and SORCS2. N-glycosylated and glycosulfated, contrary to mature BDNF. Post-translationally, mature BDNF is produced by proteolytic removal of the propeptide, catalyzed by a FURIN family member. In addition, the precursor form is proteolytically cleaved within the propeptide, but this is not an obligatory intermediate for the production of mature BDNF. Can be converted into mature BDNF by plasmin (PLG). Expressed in the dorsal root ganglion and the spinal cord (at protein level). Detected in brain, especially in brain cortex, hippocampus, midbrain and cerebellum.

It localises to the secreted. Functionally, important signaling molecule that activates signaling cascades downstream of NTRK2. During development, promotes the survival and differentiation of selected neuronal populations of the peripheral and central nervous systems. Participates in axonal growth, pathfinding and in the modulation of dendritic growth and morphology. Major regulator of synaptic transmission and plasticity at adult synapses in many regions of the CNS. The versatility of BDNF is emphasized by its contribution to a range of adaptive neuronal responses including long-term potentiation (LTP), long-term depression (LTD), certain forms of short-term synaptic plasticity, as well as homeostatic regulation of intrinsic neuronal excitability. In terms of biological role, important signaling molecule that activates signaling cascades downstream of NTRK2. Activates signaling cascades via the heterodimeric receptor formed by NGFR and SORCS2. Signaling via NGFR and SORCS2 plays a role in synaptic plasticity and long-term depression (LTD). Binding to NGFR and SORCS2 promotes neuronal apoptosis. Promotes neuronal growth cone collapse. The polypeptide is Neurotrophic factor BDNF precursor form (Bdnf) (Mus musculus (Mouse)).